Reading from the N-terminus, the 500-residue chain is Protein FAM83F (500 aa).

N-acetylalanine is present on Ala-2. Residues 2 to 300 (AESQLNCLDE…LYAISEEVDL (299 aa)) form a DUF1669 region. Residue Ser-4 is modified to Phosphoserine. 3 disordered regions span residues 82 to 109 (NARG…AYWP), 347 to 366 (QQRE…SGGE), and 391 to 500 (IPLG…CVIS). Residues 397-419 (SQKDGRMVSHMHRDLKPKSREAP) show a composition bias toward basic and acidic residues. Low complexity-rich tracts occupy residues 425–442 (GEAA…SSRL) and 458–468 (SSVSTETSEVE). Over residues 477 to 500 (ENSSADISGKTSPSSAKPSNCVIS) the composition is skewed to polar residues. Ser-479 is modified (phosphoserine).

The protein belongs to the FAM83 family. In terms of assembly, directly interacts (via DUF1669) with CSNK1A1 and CSNK1A1L.

It localises to the cell membrane. In Homo sapiens (Human), this protein is Protein FAM83F (FAM83F).